The chain runs to 254 residues: Protein U52 (254 aa).

It belongs to the herpesviridae UL79 family.

The chain is Protein U52 (U52) from Homo sapiens (Human).